Consider the following 131-residue polypeptide: SPbeta prophage-derived uncharacterized protein YosD (131 aa).

The segment at 102–131 (EHNNKKAKNNDTQNQRQIKTSWWQRLTKKD) is disordered. Residues 111–125 (NDTQNQRQIKTSWWQ) show a composition bias toward polar residues.

The polypeptide is SPbeta prophage-derived uncharacterized protein YosD (yosD) (Bacillus subtilis (strain 168)).